Consider the following 421-residue polypeptide: Histidine--tRNA ligase (421 aa).

Belongs to the class-II aminoacyl-tRNA synthetase family. In terms of assembly, homodimer.

The protein localises to the cytoplasm. The catalysed reaction is tRNA(His) + L-histidine + ATP = L-histidyl-tRNA(His) + AMP + diphosphate + H(+). In Francisella tularensis subsp. mediasiatica (strain FSC147), this protein is Histidine--tRNA ligase.